The following is a 160-amino-acid chain: Glyoxalase domain-containing protein 5 (160 aa).

The 121-residue stretch at 37 to 157 (RLDHIVMTVK…DRNLIEVSNY (121 aa)) folds into the VOC domain.

Belongs to the glyoxalase I family.

This is Glyoxalase domain-containing protein 5 (GLOD5) from Homo sapiens (Human).